The sequence spans 479 residues: Protein TRIGALACTOSYLDIACYLGLYCEROL 4, chloroplastic (479 aa).

A transmembrane span lies at residues 288–310 (VFLSSPHVAVSGIIGSVMTAAFG).

Homodimer. Forms dimeric beta-barrel. Interacts with TGD5.

The protein resides in the plastid. It is found in the chloroplast outer membrane. It localises to the endoplasmic reticulum. Functionally, involved in lipid transfer from the endoplasmic reticulum (ER) to plastids. Specifically binds phosphatidic acid (PtdOH). This Arabidopsis thaliana (Mouse-ear cress) protein is Protein TRIGALACTOSYLDIACYLGLYCEROL 4, chloroplastic.